Reading from the N-terminus, the 417-residue chain is Peptidyl-Asp metalloendopeptidase (417 aa).

The N-terminal stretch at 1–25 (MLSRSIGKAAGGLVLGLSVAAAAHA) is a signal peptide. Position 327 (H327) interacts with Zn(2+). E328 is a catalytic residue. Zn(2+) is bound by residues H331 and H337.

This sequence belongs to the peptidase M72 family. It depends on Zn(2+) as a cofactor.

It carries out the reaction Cleavage of Xaa-|-Asp, Xaa-|-Glu and Xaa-|-cysteic acid bonds.. Metalloprotease, specifically cleaves on the N-terminal side of aspartyl, glutamyl and cysteic acid residues. The polypeptide is Peptidyl-Asp metalloendopeptidase (Stenotrophomonas maltophilia (strain K279a)).